The following is a 131-amino-acid chain: Glutaredoxin arsenate reductase (131 aa).

Active-site nucleophile residues include Cys8 and Cys80. Intrachain disulfides connect Cys8–Cys80 and Cys80–Cys82.

The protein belongs to the low molecular weight phosphotyrosine protein phosphatase family. In terms of assembly, homodimer.

The enzyme catalyses O-phospho-L-tyrosyl-[protein] + H2O = L-tyrosyl-[protein] + phosphate. The catalysed reaction is [glutaredoxin]-dithiol + arsenate + glutathione + H(+) = glutathionyl-S-S-[glutaredoxin] + arsenite + H2O. Functionally, reduces arsenate [As(V)] to arsenite [As(III)] using glutathione and glutaredoxin as sources of reducing equivalents. GrxA is the most effective electron donor in vivo compared to other glutaredoxins. Constitutes the major arsenate reductase compared to ArsI1 and ArsI2. Also shows weak phosphatase activity toward p-nitrophenyl phosphate. The polypeptide is Glutaredoxin arsenate reductase (arsC) (Synechocystis sp. (strain ATCC 27184 / PCC 6803 / Kazusa)).